We begin with the raw amino-acid sequence, 515 residues long: Low affinity ammonium transporter (515 aa).

Residues 1–78 are Extracellular-facing; the sequence is MSTSSSVTQK…IIGNSFGTTN (78 aa). A helical transmembrane segment spans residues 79–99; sequence AGQLSWFASAYSLTVGTFILI. Residues 100–111 are Cytoplasmic-facing; that stretch reads AGRLGDIFGHKK. Residues 112–132 traverse the membrane as a helical segment; it reads FFVLGFFWYALWSLLAGFSVY. Residues 133–140 are Extracellular-facing; that stretch reads SNQIFFDC. Residues 141–161 traverse the membrane as a helical segment; sequence CRAFQGMGPAFLLPNAIAILG. Residues 162 to 171 lie on the Cytoplasmic side of the membrane; it reads RTYKPGRRKN. A helical transmembrane segment spans residues 172 to 192; it reads MVFSLFGASAPGGFFLGAVFS. The Extracellular portion of the chain corresponds to 193-202; sequence SMLGQLAWWP. The chain crosses the membrane as a helical span at residues 203–223; the sequence is WAYWIMGIACFVLAVAGYFVI. The Cytoplasmic segment spans residues 224-241; the sequence is PHTPMPSRDASSFKLLER. A helical membrane pass occupies residues 242–262; sequence IDFAGSVTGVVGLILFNFAWN. The Extracellular segment spans residues 263–270; the sequence is QGPVVGWQ. The helical transmembrane segment at 271–291 threads the bilayer; sequence TPYTYALLIVGTFFLVIFAYI. Over 292–310 the chain is Cytoplasmic; it reads ESRAAFPLLPFAALSSDTA. The chain crosses the membrane as a helical span at residues 311–331; the sequence is FVLSCIAAGWASFGIWIFYTW. Over 332–346 the chain is Extracellular; the sequence is QFMEDSRGQTPLLSS. The helical transmembrane segment at 347 to 367 threads the bilayer; the sequence is AQFSPVAISGFCAAVTTGFLL. Residues 368-374 lie on the Cytoplasmic side of the membrane; the sequence is SHTPPST. Residues 375–395 traverse the membrane as a helical segment; that stretch reads VMLFAMTAFTVGTILIATAPV. The Extracellular segment spans residues 396 to 403; sequence HQTYWAQT. Residues 404–424 form a helical membrane-spanning segment; it reads FVSIIVMPWGMDMSFPAATIM. Topologically, residues 425 to 435 are cytoplasmic; it reads LSDSMPHEHQG. Residues 436–456 form a helical membrane-spanning segment; that stretch reads LAASLVNTVVNYSISIGLGIA. At 457–479 the chain is on the extracellular side; sequence GTIESRVNDGGAKPLKGYRCSWY. The chain crosses the membrane as a helical span at residues 480-500; it reads MGIGLSGLGIFVAATYAWSTF. At 501–515 the chain is on the cytoplasmic side; the sequence is MKSKKRISEKQHFIE.

The protein belongs to the major facilitator superfamily.

It localises to the cell membrane. Its function is as follows. Low affinity ammonium transporter of the plasma membrane. May be involved in drug resistance through pumping them out of the cell. This Saccharomyces cerevisiae (strain ATCC 204508 / S288c) (Baker's yeast) protein is Low affinity ammonium transporter.